Consider the following 342-residue polypeptide: Delta(6)-protoilludene synthase (342 aa).

Mg(2+) is bound by residues aspartate 81, asparagine 217, serine 221, and glutamate 225. Residues 81 to 85 (DEYSD) carry the DDXXD motif motif. Positions 306 and 307 each coordinate (2E,6E)-farnesyl diphosphate.

It belongs to the terpene synthase family. Mg(2+) is required as a cofactor.

The catalysed reaction is (2E,6E)-farnesyl diphosphate = Delta(6)-protoilludene + diphosphate. Its function is as follows. Delta(6)-protoilludene synthase, part of the gene cluster that mediates the biosynthesis of melleolides, a range of antifungal and phytotoxic polyketide derivatives composed of an orsellinic acid (OA) moiety esterified to various sesquiterpene alcohols. The first step in melleolides biosynthesis is performed by the delta(6)-protoilludene synthase PRO1 which catalyzes the cyclization of farnesyl diphosphate to protoilludene. The orsellinic acid synthase armB produces OA by condensing acetyl-CoA with 3 malonyl-CoA units in a three-round chain elongation reaction folowed by a C2-C7 ring closure. ArmB further catalyzes the trans-esterification of OA to the various sesquiterpene alcohols resulting from the hydroxylation of protoilludene. The melleolides cluster also includes 5 cytochrome P450 monooxygenases, 4 NAD(+)-dependent oxidoreductases, one flavin-dependent oxidoreductase, and one O-methyltransferase. The cytochrome P450 monooxygenases may be involved in protoilludene hydroxylation to elaborate melleolides with multiple alcohol groups, such as melleolide D, which carries alcohol functionalities at C-4, C-5, C-10, and C-13. The role of the NAD(+)-dependent enzymes remains unknown. Numerous melleolides, including arnamial, show 5'-O-methylation of the aromatic moiety which may be catalyzed by the methyltransferase encoded in the cluster. The flavin-dependent oxidoreductase might represent the dehydrogenase yielding the aldehyde in position 1 of arnamial and other melleolides. Finally, several halogenases, localized outside of the cluster, are able to catalyze the transfer of a single chlorine atom to the melleolide backbone, resulting in a 6'-chloromelleolide product. This chain is Delta(6)-protoilludene synthase, found in Armillaria ostoyae (Armillaria root rot fungus).